A 1029-amino-acid polypeptide reads, in one-letter code: Carbamoyl phosphate synthase large chain (1029 aa).

Positions 1-402 (MPKRTDLQTI…SLQKALRSTE (402 aa)) are carboxyphosphate synthetic domain. ATP-binding residues include R129, R169, G175, G176, E208, I210, E215, G241, V242, H243, Q285, and E299. Positions 133-328 (QAAMKKIGVE…IAKIAALLAV (196 aa)) constitute an ATP-grasp 1 domain. Q285, E299, and N301 together coordinate Mg(2+). Q285, E299, and N301 together coordinate Mn(2+). Residues 403–546 (SDVRGAFAEM…YSTYEWEDEV (144 aa)) form an oligomerization domain region. Residues 547–929 (TPTDKPKVVI…AYYRAELGAK (383 aa)) are carbamoyl phosphate synthetic domain. Residues 671 to 863 (NALCERLGLP…LAKYAARIAV (193 aa)) form the ATP-grasp 2 domain. The ATP site is built by R707, Q747, L749, E754, G779, V780, H781, S782, Q822, and E834. Residues Q822, E834, and N836 each coordinate Mg(2+). Mn(2+) is bound by residues Q822, E834, and N836. Residues 930–1028 (SNLPLSGTAL…QAWQQREAAA (99 aa)) enclose the MGS-like domain. The tract at residues 930–1029 (SNLPLSGTAL…AWQQREAAAS (100 aa)) is allosteric domain.

The protein belongs to the CarB family. In terms of assembly, composed of two chains; the small (or glutamine) chain promotes the hydrolysis of glutamine to ammonia, which is used by the large (or ammonia) chain to synthesize carbamoyl phosphate. Tetramer of heterodimers (alpha,beta)4. Mg(2+) is required as a cofactor. The cofactor is Mn(2+).

It catalyses the reaction hydrogencarbonate + L-glutamine + 2 ATP + H2O = carbamoyl phosphate + L-glutamate + 2 ADP + phosphate + 2 H(+). The catalysed reaction is hydrogencarbonate + NH4(+) + 2 ATP = carbamoyl phosphate + 2 ADP + phosphate + 2 H(+). Its pathway is amino-acid biosynthesis; L-arginine biosynthesis; carbamoyl phosphate from bicarbonate: step 1/1. It participates in pyrimidine metabolism; UMP biosynthesis via de novo pathway; (S)-dihydroorotate from bicarbonate: step 1/3. In terms of biological role, large subunit of the glutamine-dependent carbamoyl phosphate synthetase (CPSase). CPSase catalyzes the formation of carbamoyl phosphate from the ammonia moiety of glutamine, carbonate, and phosphate donated by ATP, constituting the first step of 2 biosynthetic pathways, one leading to arginine and/or urea and the other to pyrimidine nucleotides. The large subunit (synthetase) binds the substrates ammonia (free or transferred from glutamine from the small subunit), hydrogencarbonate and ATP and carries out an ATP-coupled ligase reaction, activating hydrogencarbonate by forming carboxy phosphate which reacts with ammonia to form carbamoyl phosphate. This Deinococcus geothermalis (strain DSM 11300 / CIP 105573 / AG-3a) protein is Carbamoyl phosphate synthase large chain.